A 333-amino-acid polypeptide reads, in one-letter code: Viral cathepsin (333 aa).

A signal peptide spans 1-20; the sequence is MTKLLNFVILASVLTVTAHA. The propeptide at 21 to 124 is activation peptide; sequence LTYDLNNSDE…VIKDEPQALL (104 aa). Intrachain disulfides connect C145–C186, C179–C219, and C272–C321. Residue C148 is part of the active site. The N-linked (GlcNAc...) asparagine; by host glycan is linked to N170. Catalysis depends on residues H280 and N300.

Belongs to the peptidase C1 family. Synthesized as an inactive proenzyme and activated by proteolytic removal of the inhibitory propeptide.

It catalyses the reaction Endopeptidase of broad specificity, hydrolyzing substrates of both cathepsin L and cathepsin B.. Functionally, cysteine protease that plays an essential role in host liquefaction to facilitate horizontal transmission of the virus. May participate in the degradation of foreign protein expressed by the baculovirus system. This Cydia pomonella granulosis virus (isolate Mexico/1963) (CpGV) protein is Viral cathepsin (VCATH).